A 1136-amino-acid polypeptide reads, in one-letter code: Collagen alpha-1(XIX) chain (1136 aa).

An N-terminal signal peptide occupies residues M1–C23. N-linked (GlcNAc...) asparagine glycosylation occurs at N47. Residues N47–A231 enclose the Laminin G-like domain. Disordered regions lie at residues D252–L272, E289–P673, G699–D1005, and S1043–K1136. The segment covering G254–G266 has biased composition (low complexity). Residues E289–S348 form a triple-helical region 1 (COL1) region. Collagen-like domains follow at residues G292–G346, D347–G388, and S389–G430. Composition is skewed to basic and acidic residues over residues H302–L314 and I332–A344. The triple-helical region 2 (COL2) stretch occupies residues G367–P426. Positions T387–K401 are enriched in low complexity. A compositionally biased stretch (pro residues) spans P414–P426. The span at L428–G437 shows a compositional bias: low complexity. The tract at residues G442–I682 is triple-helical region 3 (COL3). Residues H472–E490 are compositionally biased toward basic and acidic residues. Low complexity-rich tracts occupy residues L511–P523 and P567–G577. Collagen-like domains lie at G519 to G577, I578 to G618, G620 to P673, K722 to G777, L778 to G810, and G833 to P891. Residues P634–L645 are compositionally biased toward low complexity. The segment at Q694–P812 is triple-helical region 4 (COL4). Basic and acidic residues-rich tracts occupy residues G714–V725 and E737–E758. The segment covering P764 to T788 has biased composition (low complexity). Pro residues-rich tracts occupy residues P800 to V811 and Y834 to D846. Residues G827–A1006 are triple-helical region 5 (COL5). Low complexity predominate over residues P877–P886. The span at P937 to D948 shows a compositional bias: basic and acidic residues. The Cell attachment site signature appears at R946–D948. Residues G1048–P1105 form a triple-helical region 6 (COL6) region. Residues S1087–S1101 show a composition bias toward low complexity. Pro residues predominate over residues P1102–P1113.

It belongs to the fibril-associated collagens with interrupted helices (FACIT) family. In terms of assembly, oligomer; disulfide-linked. Prolines at the third position of the tripeptide repeating unit (G-X-Y) are hydroxylated in some or all of the chains.

The protein localises to the secreted. Its subcellular location is the extracellular space. The protein resides in the extracellular matrix. Functionally, may act as a cross-bridge between fibrils and other extracellular matrix molecules. Involved in skeletal myogenesis in the developing esophagus. May play a role in organization of the pericellular matrix or the sphinteric smooth muscle. This chain is Collagen alpha-1(XIX) chain, found in Mus musculus (Mouse).